Consider the following 441-residue polypeptide: Diuretic hormone receptor (441 aa).

3 N-linked (GlcNAc...) asparagine glycosylation sites follow: Asn-99, Asn-107, and Asn-112. A helical membrane pass occupies residues 135-158; it reads FVFFVGFCLSLVAIAVAIWIFLYF. The Cytoplasmic portion of the chain corresponds to 159–166; sequence KDLRCLRN. Residues 167–187 form a helical membrane-spanning segment; the sequence is TIHTNLMATYICNDATWIISA. Over 188–194 the chain is Extracellular; sequence VVQEYVE. A helical membrane pass occupies residues 195–224; it reads NGGLCSVLAVLMHYFYLTNFFWMFVEGLYL. Topologically, residues 225–238 are cytoplasmic; that stretch reads FLLVVATFTGEKVK. Residues 239-260 form a helical membrane-spanning segment; it reads LQIYIIIGWGIPGVIVVTWAII. Residues 261–291 are Extracellular-facing; it reads KHLGKTAPDNAGESHPMVLLIKHCPWMAEDY. The helical transmembrane segment at 292 to 315 threads the bilayer; it reads FDWIHQAPVITVLAVNLVFLFSIM. Residues 316 to 338 are Cytoplasmic-facing; that stretch reads WVLITKLQSANTAETQQYRKATK. Residues 339 to 357 traverse the membrane as a helical segment; the sequence is ALLVLFPLLGITYILMMQG. Topologically, residues 358-371 are extracellular; sequence PMDGVAGHVFRNAQ. A helical transmembrane segment spans residues 372–391; it reads ALLLSLQGFTVALFYCFLNT. Residues 392–441 are Cytoplasmic-facing; the sequence is EVQNTLRHRMSRWRETRTVGGGRRYTLSGHSKDWSPRSRTESIRCLQHRS.

It belongs to the G-protein coupled receptor 2 family. As to expression, expressed in Malpighian tubules.

It localises to the cell membrane. Receptor for the insect diurectic hormone. The activity of this receptor is mediated by G proteins which activate adenylyl cyclase. This is Diuretic hormone receptor from Acheta domesticus (House cricket).